A 348-amino-acid polypeptide reads, in one-letter code: Lysophosphatidic acid receptor 2 (348 aa).

Topologically, residues 1–30 (MGQCYYNETIGFFYNNSGKELSSHWRPKDV) are extracellular. N-linked (GlcNAc...) asparagine glycans are attached at residues N7 and N15. A helical transmembrane segment spans residues 31-51 (VVVALGLTVSVLVLLTNLLVI). The Cytoplasmic portion of the chain corresponds to 52–66 (AAIASNRRFHQPIYY). A helical transmembrane segment spans residues 67-87 (LLGNLAAADLFAGVAYLFLMF). Over 88-100 (HTGPRTARLSLEG) the chain is Extracellular. A helical membrane pass occupies residues 101 to 123 (WFLRQGLLDTSLTASVATLLAIA). Residues 124–143 (VERHRSVMAVQLHSRLPRGR) are Cytoplasmic-facing. The helical transmembrane segment at 144–164 (VVMLIVGVWVAALGLGLLPAH) threads the bilayer. Residues 165–185 (SWHCLCALDRCSRMAPLLSRS) are Extracellular-facing. Residues 186 to 206 (YLAVWALSSLLVFLLMVAVYT) form a helical membrane-spanning segment. The Cytoplasmic portion of the chain corresponds to 207–239 (RIFFYVRRRVQRMAEHVSCHPRYRETTLSLVKT). Residues 240 to 260 (VVIILGAFVVCWTPGQVVLLL) traverse the membrane as a helical segment. Over 261 to 276 (DGLGCESCNVLAVEKY) the chain is Extracellular. The chain crosses the membrane as a helical span at residues 277-294 (FLLLAEANSLVNAAVYSC). Residues 295 to 348 (RDAEMRRTFRRLLCCACLRQSTRESVHYTSSAQGGASTRIMLPENGHPLMDSTL) lie on the Cytoplasmic side of the membrane. A lipid anchor (S-palmitoyl cysteine) is attached at C308. The PDZ-binding signature appears at 345–348 (DSTL).

The protein belongs to the G-protein coupled receptor 1 family. In terms of assembly, interacts with SLC9A3R2/NHERF2, MAGI3 and PLCB3. Interacts with RALA and GRK2. In terms of tissue distribution, expressed most abundantly in testes and peripheral blood leukocytes with less expression in pancreas, spleen, thymus and prostate. Little or no expression in heart, brain, placenta, lung, liver, skeletal muscle, kidney, ovary, small intestine, or colon.

It localises to the cell surface. Its subcellular location is the cell membrane. Receptor for lysophosphatidic acid (LPA), a mediator of diverse cellular activities. Seems to be coupled to the G(i)/G(o), G(12)/G(13), and G(q) families of heteromeric G proteins. Plays a key role in phospholipase C-beta (PLC-beta) signaling pathway. Stimulates phospholipase C (PLC) activity in a manner that is independent of RALA activation. In Homo sapiens (Human), this protein is Lysophosphatidic acid receptor 2.